Reading from the N-terminus, the 100-residue chain is uncharacterized protein (100 aa).

Transmembrane regions (helical) follow at residues 1 to 21 (MLVL…YKVK) and 54 to 74 (MILF…VIGA).

Its subcellular location is the cell membrane. This is an uncharacterized protein from Bacillus subtilis (strain 168).